Consider the following 986-residue polypeptide: Epidermin biosynthesis protein EpiB (986 aa).

The protein to B.subtilis SpaB and L.lactis NisB.

It localises to the cell membrane. Involved in the post-translational modification of the lantibiotic epidermin. The sequence is that of Epidermin biosynthesis protein EpiB (epiB) from Staphylococcus epidermidis.